The sequence spans 158 residues: Ribonuclease H (158 aa).

In terms of domain architecture, RNase H type-1 spans 2 to 143; it reads PEKIIELFTD…VDALLNRVMD (142 aa). Mg(2+) is bound by residues D11, E49, D71, and D135.

The protein belongs to the RNase H family. Monomer. Mg(2+) is required as a cofactor.

It is found in the cytoplasm. It catalyses the reaction Endonucleolytic cleavage to 5'-phosphomonoester.. Its function is as follows. Endonuclease that specifically degrades the RNA of RNA-DNA hybrids. The chain is Ribonuclease H from Acidithiobacillus ferrooxidans (strain ATCC 23270 / DSM 14882 / CIP 104768 / NCIMB 8455) (Ferrobacillus ferrooxidans (strain ATCC 23270)).